The sequence spans 438 residues: 23S rRNA (uracil(1939)-C(5))-methyltransferase RlmD (438 aa).

The TRAM domain maps to 8 to 68; it reads KQKTNNVQTI…RQYGHATAKK (61 aa). 4 residues coordinate [4Fe-4S] cluster: C81, C87, C90, and C168. S-adenosyl-L-methionine is bound by residues Q271, F300, N305, E321, D348, and D369. C395 serves as the catalytic Nucleophile.

This sequence belongs to the class I-like SAM-binding methyltransferase superfamily. RNA M5U methyltransferase family. RlmD subfamily.

The catalysed reaction is uridine(1939) in 23S rRNA + S-adenosyl-L-methionine = 5-methyluridine(1939) in 23S rRNA + S-adenosyl-L-homocysteine + H(+). Catalyzes the formation of 5-methyl-uridine at position 1939 (m5U1939) in 23S rRNA. This is 23S rRNA (uracil(1939)-C(5))-methyltransferase RlmD from Haemophilus influenzae (strain 86-028NP).